Reading from the N-terminus, the 111-residue chain is Large ribosomal subunit protein uL22 (111 aa).

The protein belongs to the universal ribosomal protein uL22 family. In terms of assembly, part of the 50S ribosomal subunit.

In terms of biological role, this protein binds specifically to 23S rRNA; its binding is stimulated by other ribosomal proteins, e.g. L4, L17, and L20. It is important during the early stages of 50S assembly. It makes multiple contacts with different domains of the 23S rRNA in the assembled 50S subunit and ribosome. Its function is as follows. The globular domain of the protein is located near the polypeptide exit tunnel on the outside of the subunit, while an extended beta-hairpin is found that lines the wall of the exit tunnel in the center of the 70S ribosome. This is Large ribosomal subunit protein uL22 from Acholeplasma laidlawii (strain PG-8A).